A 181-amino-acid polypeptide reads, in one-letter code: MEQYHGTTIISVRRQTPEGVQVAIGGDGQVTLGNIVVKGTARKVRKLYHGKVLAGFAGATADAFTLFERFEAKLEKHQGHLTRAAIELTKDWRTDRVLRRLEAMLAVADASASLIITGNGDVLEPEQGIVSIGSGGAYAHSAAKALLTNTELSAEEIVRKSLAIAGELCIYTNMHHTVETL.

Residue T7 is part of the active site. Na(+) contacts are provided by G166, C169, and T172.

The protein belongs to the peptidase T1B family. HslV subfamily. In terms of assembly, a double ring-shaped homohexamer of HslV is capped on each side by a ring-shaped HslU homohexamer. The assembly of the HslU/HslV complex is dependent on binding of ATP.

The protein localises to the cytoplasm. It catalyses the reaction ATP-dependent cleavage of peptide bonds with broad specificity.. Its activity is regulated as follows. Allosterically activated by HslU binding. Its function is as follows. Protease subunit of a proteasome-like degradation complex believed to be a general protein degrading machinery. The polypeptide is ATP-dependent protease subunit HslV (Delftia acidovorans (strain DSM 14801 / SPH-1)).